Here is a 514-residue protein sequence, read N- to C-terminus: ATP synthase subunit alpha (514 aa).

170–177 (GDRQIGKT) contacts ATP.

This sequence belongs to the ATPase alpha/beta chains family. As to quaternary structure, F-type ATPases have 2 components, CF(1) - the catalytic core - and CF(0) - the membrane proton channel. CF(1) has five subunits: alpha(3), beta(3), gamma(1), delta(1), epsilon(1). CF(0) has three main subunits: a(1), b(2) and c(9-12). The alpha and beta chains form an alternating ring which encloses part of the gamma chain. CF(1) is attached to CF(0) by a central stalk formed by the gamma and epsilon chains, while a peripheral stalk is formed by the delta and b chains.

Its subcellular location is the cell inner membrane. The catalysed reaction is ATP + H2O + 4 H(+)(in) = ADP + phosphate + 5 H(+)(out). Functionally, produces ATP from ADP in the presence of a proton gradient across the membrane. The alpha chain is a regulatory subunit. The chain is ATP synthase subunit alpha from Pseudomonas fluorescens (strain SBW25).